The following is a 199-amino-acid chain: Dephospho-CoA kinase (199 aa).

In terms of domain architecture, DPCK spans 11-199 (RIGLTGGIAS…DLHDQLDALL (189 aa)). 19–24 (ASGKSS) contributes to the ATP binding site.

It belongs to the CoaE family.

It is found in the cytoplasm. It carries out the reaction 3'-dephospho-CoA + ATP = ADP + CoA + H(+). It functions in the pathway cofactor biosynthesis; coenzyme A biosynthesis; CoA from (R)-pantothenate: step 5/5. In terms of biological role, catalyzes the phosphorylation of the 3'-hydroxyl group of dephosphocoenzyme A to form coenzyme A. The sequence is that of Dephospho-CoA kinase from Synechococcus sp. (strain CC9902).